The following is a 421-amino-acid chain: Voltage-dependent calcium channel gamma-8 subunit (421 aa).

The next 4 membrane-spanning stretches (helical) occupy residues 19–39 (VQVL…TIAI), 127–147 (SSIF…CVAA), 157–177 (IILG…IGVI), and 207–227 (FGGL…NIYI). 2 positions are modified to phosphoserine: Ser251 and Ser254. A disordered region spans residues 271 to 304 (RRSRSSSRGSSEASPSRDASPGGPGGPGFASTDI). Positions 276 to 287 (SSRGSSEASPSR) are enriched in low complexity. The chain crosses the membrane as a helical span at residues 318–338 (VAAGLASAGGGGGGAGVGAYG). 2 disordered regions span residues 342–363 (GAAG…GFLT) and 378–421 (VTVT…TTPV). A compositionally biased stretch (pro residues) spans 384-397 (PAAPAPAPPAPAAP). A compositionally biased stretch (polar residues) spans 408–421 (ASNTNTLNRKTTPV).

Belongs to the PMP-22/EMP/MP20 family. CACNG subfamily. As to quaternary structure, interacts with CACNA1C. Identified in a complex with the L-type calcium channel subunits CACNA1C, CACNA2D1 and either CACNB1 or CACNB2. Acts as an auxiliary subunit for AMPA-selective glutamate receptors (AMPARs). Found in a complex with GRIA1, GRIA2, GRIA3, GRIA4, CNIH2, CNIH3, CACNG2, CACNG3, CACNG4, CACNG5 and CACNG7. Interacts with CNIH2. Found in a complex with GRIA1, GRIA2, GRIA3, GRIA4, DLG4 and CNIH2. Palmitoylated. Probably palmitoylated by ZDHHC3 and ZDHHC7.

It is found in the cell membrane. The protein resides in the postsynaptic density membrane. In terms of biological role, regulates the activity of L-type calcium channels that contain CACNA1C as pore-forming subunit. Regulates the trafficking and gating properties of AMPA-selective glutamate receptors (AMPARs). Promotes their targeting to the cell membrane and synapses and modulates their gating properties by slowing their rates of activation, deactivation and desensitization and by mediating their resensitization. Does not show subunit-specific AMPA receptor regulation and regulates all AMPAR subunits. Thought to stabilize the calcium channel in an inactivated (closed) state. This Rattus norvegicus (Rat) protein is Voltage-dependent calcium channel gamma-8 subunit.